The following is a 978-amino-acid chain: Sensor histidine kinase TodS (978 aa).

In terms of domain architecture, PAS 1 spans 32-103; it reads CEEHARIIFD…TQKRLVETAS (72 aa). The region spanning 108–162 is the PAC 1 domain; the sequence is VRCDVEILGKSGGREVIAVDFSLLPICNEEGSIVYLLAEGRNITDKKKAEAMLAL. The Histidine kinase 1 domain maps to 187–405; the sequence is KVSHELRTPL…LFQVKLPLNA (219 aa). His190 carries the post-translational modification Phosphohistidine; by autocatalysis. The 116-residue stretch at 452-567 folds into the Response regulatory domain; sequence RVLIVEDNPD…ELRARVSNLV (116 aa). Residue Asp500 is modified to 4-aspartylphosphate. The region spanning 611 to 681 is the PAS 2 domain; it reads SEARWKAVYE…QRLANLLQGG (71 aa). The 53-residue stretch at 685–737 folds into the PAC 2 domain; that stretch reads YSVERSYLCKNGSTIWANASVSLMPQRVGESPVILQIIDDITEKKQAQENLNQ. Residues 757–974 enclose the Histidine kinase 2 domain; sequence YIAHEINQPL…CFLVSIPARQ (218 aa). Phosphohistidine is present on His760.

Post-translationally, autophosphorylated. Activation requires a sequential transfer of a phosphate group from a His in the primary transmitter domain, to an Asp in the receiver domain and to a His in the secondary transmitter domain.

Its subcellular location is the cytoplasm. It carries out the reaction ATP + protein L-histidine = ADP + protein N-phospho-L-histidine.. Activity is regulated by agonists and antagonists. Binding of agonists such as toluene or benzene to TodS stimulates autophosphorylation at His-190. Activity is inhibited by antagonists such as o-xylene, o-chlorotoluene and trimethylbenzene isomers, which bind to TodS but do not stimulate autophosphorylation. Agonists and antagonists bind to the same PAS domain. Its function is as follows. Member of the two-component regulatory system TodS/TodT involved in the regulation of toluene degradation. Phosphorylates TodT via a four-step phosphorelay in response to toluene. Can also be induced by benzene and ethylbenzene. The protein is Sensor histidine kinase TodS (todS) of Pseudomonas putida (strain DOT-T1E).